The primary structure comprises 731 residues: Polyribonucleotide nucleotidyltransferase (731 aa).

Positions 488 and 494 each coordinate Mg(2+). In terms of domain architecture, KH spans 555 to 614 (PRIEVINIAVDKIRDVIGSGGKVIREIVEQTGAKINIEDDGTIKIASADAKTIEAAKRWI). An S1 motif domain is found at 624–692 (GAIYQGTVVK…ERGKVRLSMK (69 aa)). The interval 693–731 (AVDQKTGKEMTDDKSVKEEKCMDEKKQPENKRRRKKKEE) is disordered. Positions 694 to 722 (VDQKTGKEMTDDKSVKEEKCMDEKKQPEN) are enriched in basic and acidic residues.

It belongs to the polyribonucleotide nucleotidyltransferase family. Mg(2+) is required as a cofactor.

The protein resides in the cytoplasm. The enzyme catalyses RNA(n+1) + phosphate = RNA(n) + a ribonucleoside 5'-diphosphate. In terms of biological role, involved in mRNA degradation. Catalyzes the phosphorolysis of single-stranded polyribonucleotides processively in the 3'- to 5'-direction. In Bartonella tribocorum (strain CIP 105476 / IBS 506), this protein is Polyribonucleotide nucleotidyltransferase.